A 594-amino-acid chain; its full sequence is Aspartate--tRNA(Asp/Asn) ligase (594 aa).

Residue Glu173 participates in L-aspartate binding. An aspartate region spans residues 197–200 (QLFK). Arg219 contacts L-aspartate. ATP is bound by residues 219–221 (RDE) and Gln228. Residue His449 coordinates L-aspartate. Glu482 contributes to the ATP binding site. Arg489 contacts L-aspartate. Position 534–537 (534–537 (GLDR)) interacts with ATP.

This sequence belongs to the class-II aminoacyl-tRNA synthetase family. Type 1 subfamily. Homodimer.

It is found in the cytoplasm. It carries out the reaction tRNA(Asx) + L-aspartate + ATP = L-aspartyl-tRNA(Asx) + AMP + diphosphate. In terms of biological role, aspartyl-tRNA synthetase with relaxed tRNA specificity since it is able to aspartylate not only its cognate tRNA(Asp) but also tRNA(Asn). Reaction proceeds in two steps: L-aspartate is first activated by ATP to form Asp-AMP and then transferred to the acceptor end of tRNA(Asp/Asn). The sequence is that of Aspartate--tRNA(Asp/Asn) ligase from Saccharophagus degradans (strain 2-40 / ATCC 43961 / DSM 17024).